A 278-amino-acid polypeptide reads, in one-letter code: Malonyl-[acyl-carrier protein] O-methyltransferase (278 aa).

Belongs to the methyltransferase superfamily.

It carries out the reaction malonyl-[ACP] + S-adenosyl-L-methionine = malonyl-[ACP] methyl ester + S-adenosyl-L-homocysteine. Its pathway is cofactor biosynthesis; biotin biosynthesis. Functionally, converts the free carboxyl group of a malonyl-thioester to its methyl ester by transfer of a methyl group from S-adenosyl-L-methionine (SAM). It allows to synthesize pimeloyl-ACP via the fatty acid synthetic pathway. This chain is Malonyl-[acyl-carrier protein] O-methyltransferase, found in Brevibacillus brevis (strain 47 / JCM 6285 / NBRC 100599).